The sequence spans 615 residues: Peptidoglycan-binding protein YepA (615 aa).

The signal sequence occupies residues 1–26 (MRNLAALLPALFLLGSSLLPAGTALA).

It belongs to the bacterial solute-binding protein 5 family. In terms of assembly, the complex is composed of one ATP-binding protein (YejF), two transmembrane proteins (YejB and YejE) and a solute-binding protein (YepA).

The protein resides in the periplasm. Its function is as follows. Part of the ABC transporter complex YejBEF-YepA involved in the uptake of muropeptides, the breakdown products of cell wall peptidoglycan. The import of muropeptides into the cell enables peptidoglycan recycling, which is vital for cell wall integrity in this bacterium. Probably binds muropeptides. This Agrobacterium fabrum (strain C58 / ATCC 33970) (Agrobacterium tumefaciens (strain C58)) protein is Peptidoglycan-binding protein YepA.